The following is a 256-amino-acid chain: Triosephosphate isomerase (256 aa).

Substrate is bound at residue 10–12 (NWK). Catalysis depends on H97, which acts as the Electrophile. The Proton acceptor role is filled by E169. Residues G175, S214, and 235 to 236 (GG) each bind substrate.

The protein belongs to the triosephosphate isomerase family. In terms of assembly, homodimer.

The protein resides in the cytoplasm. It catalyses the reaction D-glyceraldehyde 3-phosphate = dihydroxyacetone phosphate. The protein operates within carbohydrate biosynthesis; gluconeogenesis. Its pathway is carbohydrate degradation; glycolysis; D-glyceraldehyde 3-phosphate from glycerone phosphate: step 1/1. Functionally, involved in the gluconeogenesis. Catalyzes stereospecifically the conversion of dihydroxyacetone phosphate (DHAP) to D-glyceraldehyde-3-phosphate (G3P). The sequence is that of Triosephosphate isomerase from Actinobacillus pleuropneumoniae serotype 7 (strain AP76).